Here is a 153-residue protein sequence, read N- to C-terminus: D-aminoacyl-tRNA deacylase (153 aa).

The short motif at 142 to 143 (GP) is the Gly-cisPro motif, important for rejection of L-amino acids element.

The protein belongs to the DTD family. Homodimer.

It is found in the cytoplasm. The catalysed reaction is glycyl-tRNA(Ala) + H2O = tRNA(Ala) + glycine + H(+). The enzyme catalyses a D-aminoacyl-tRNA + H2O = a tRNA + a D-alpha-amino acid + H(+). Its function is as follows. An aminoacyl-tRNA editing enzyme that deacylates mischarged D-aminoacyl-tRNAs. Also deacylates mischarged glycyl-tRNA(Ala), protecting cells against glycine mischarging by AlaRS. Acts via tRNA-based rather than protein-based catalysis; rejects L-amino acids rather than detecting D-amino acids in the active site. By recycling D-aminoacyl-tRNA to D-amino acids and free tRNA molecules, this enzyme counteracts the toxicity associated with the formation of D-aminoacyl-tRNA entities in vivo and helps enforce protein L-homochirality. The sequence is that of D-aminoacyl-tRNA deacylase from Cupriavidus necator (strain ATCC 17699 / DSM 428 / KCTC 22496 / NCIMB 10442 / H16 / Stanier 337) (Ralstonia eutropha).